We begin with the raw amino-acid sequence, 477 residues long: Secreted RxLR effector protein 102 (477 aa).

The N-terminal stretch at 1-20 (MRGGYYVLTALFVVASSEIA) is a signal peptide. Positions 48-65 (RFLRESRGVHGNVANEER) match the RxLR-dEER motif. Disordered stretches follow at residues 326-345 (SKGQIPYPSEPLNAASTSKG), 351-370 (IKRSKRTSDGNTDIASLPSI), 376-401 (SSKSVMPLLTESTTSGDHSVPAKRSR), and 433-455 (PRSAVDPYTQSKKHSTKALAPSS).

Belongs to the RxLR effector family.

The protein resides in the secreted. Its subcellular location is the host nucleus. Secreted effector that acts as an elicitor that induces cell death in host plant cells. In Plasmopara viticola (Downy mildew of grapevine), this protein is Secreted RxLR effector protein 102.